The chain runs to 492 residues: Aspartyl/glutamyl-tRNA(Asn/Gln) amidotransferase subunit B (492 aa).

It belongs to the GatB/GatE family. GatB subfamily. Heterotrimer of A, B and C subunits.

The enzyme catalyses L-glutamyl-tRNA(Gln) + L-glutamine + ATP + H2O = L-glutaminyl-tRNA(Gln) + L-glutamate + ADP + phosphate + H(+). It carries out the reaction L-aspartyl-tRNA(Asn) + L-glutamine + ATP + H2O = L-asparaginyl-tRNA(Asn) + L-glutamate + ADP + phosphate + 2 H(+). Its function is as follows. Allows the formation of correctly charged Asn-tRNA(Asn) or Gln-tRNA(Gln) through the transamidation of misacylated Asp-tRNA(Asn) or Glu-tRNA(Gln) in organisms which lack either or both of asparaginyl-tRNA or glutaminyl-tRNA synthetases. The reaction takes place in the presence of glutamine and ATP through an activated phospho-Asp-tRNA(Asn) or phospho-Glu-tRNA(Gln). The chain is Aspartyl/glutamyl-tRNA(Asn/Gln) amidotransferase subunit B from Bradyrhizobium sp. (strain BTAi1 / ATCC BAA-1182).